We begin with the raw amino-acid sequence, 396 residues long: Beta-1,4-galactosyltransferase 3 (396 aa).

Residues 1-10 (MLRRLLERPC) are Cytoplasmic-facing. A helical; Signal-anchor for type II membrane protein membrane pass occupies residues 11-31 (TLALLVGSQLAVMMYLSLGGF). The Lumenal segment spans residues 32–396 (RSLSALFGRE…ANHTAPHGSH (365 aa)). Asn57 carries an N-linked (GlcNAc...) asparagine glycan. Cys80 and Cys122 are oxidised to a cystine. Residue 133 to 137 (PHRAR) coordinates UDP-alpha-D-galactose. N-linked (GlcNAc...) asparagine glycosylation is present at Asn169. UDP-alpha-D-galactose contacts are provided by residues 172 to 174 (FNR), 199 to 200 (VD), Tyr229, and Trp261. Cys193 and Cys212 are oxidised to a cystine. Position 200 (Asp200) interacts with Mn(2+). 263–266 (GEDD) contributes to the N-acetyl-D-glucosamine binding site. His294 contributes to the Mn(2+) binding site. 294-296 (HRG) lines the UDP-alpha-D-galactose pocket. N-acetyl-D-glucosamine is bound at residue Arg306. Residue Asn340 is glycosylated (N-linked (GlcNAc...) asparagine). Residues 341-396 (ITADIGTDPRGPRTSSGPHYPPGSSQAFRQEMLQRRPPARPGPLPTANHTAPHGSH) form a disordered region. Positions 353–368 (RTSSGPHYPPGSSQAF) are enriched in polar residues. Asn388 is a glycosylation site (N-linked (GlcNAc...) asparagine).

The protein belongs to the glycosyltransferase 7 family. Mn(2+) is required as a cofactor.

The protein resides in the golgi apparatus. It localises to the golgi stack membrane. It catalyses the reaction an N-acetyl-beta-D-glucosaminyl derivative + UDP-alpha-D-galactose = a beta-D-galactosyl-(1-&gt;4)-N-acetyl-beta-D-glucosaminyl derivative + UDP + H(+). The catalysed reaction is N-acetyl-D-glucosamine + UDP-alpha-D-galactose = beta-D-galactosyl-(1-&gt;4)-N-acetyl-D-glucosamine + UDP + H(+). The enzyme catalyses a beta-D-GlcNAc-(1-&gt;3)-beta-D-Gal-(1-&gt;4)-beta-D-Glc-(1&lt;-&gt;1)-Cer(d18:1(4E)) + UDP-alpha-D-galactose = a neolactoside nLc4Cer(d18:1(4E)) + UDP + H(+). It carries out the reaction a beta-D-glucosylceramide + UDP-alpha-D-galactose = a beta-D-galactosyl-(1-&gt;4)-beta-D-glucosyl-(1&lt;-&gt;1)-ceramide + UDP + H(+). It catalyses the reaction a neolactoside IV(3)-beta-GlcNAc-nLc4Cer + UDP-alpha-D-galactose = a neolactoside nLc6Cer + UDP + H(+). Its pathway is protein modification; protein glycosylation. Its function is as follows. Responsible for the synthesis of complex-type N-linked oligosaccharides in many glycoproteins as well as the carbohydrate moieties of glycolipids. The protein is Beta-1,4-galactosyltransferase 3 (B4GALT3) of Bos taurus (Bovine).